The primary structure comprises 540 residues: 2-isopropylmalate synthase (540 aa).

A Pyruvate carboxyltransferase domain is found at 8 to 273 (VLIFDTTLRD…FFGRDQDSPT (266 aa)). 4 residues coordinate Mn(2+): Asp17, His208, His210, and Asn244. A regulatory domain region spans residues 408-540 (QLQLVQVSCG…AVVLDARPTL (133 aa)).

It belongs to the alpha-IPM synthase/homocitrate synthase family. LeuA type 1 subfamily. Homodimer. The cofactor is Mn(2+).

The protein localises to the cytoplasm. It catalyses the reaction 3-methyl-2-oxobutanoate + acetyl-CoA + H2O = (2S)-2-isopropylmalate + CoA + H(+). Its pathway is amino-acid biosynthesis; L-leucine biosynthesis; L-leucine from 3-methyl-2-oxobutanoate: step 1/4. Its function is as follows. Catalyzes the condensation of the acetyl group of acetyl-CoA with 3-methyl-2-oxobutanoate (2-ketoisovalerate) to form 3-carboxy-3-hydroxy-4-methylpentanoate (2-isopropylmalate). The sequence is that of 2-isopropylmalate synthase from Parasynechococcus marenigrum (strain WH8102).